Here is a 253-residue protein sequence, read N- to C-terminus: tRNA (guanine-N(1)-)-methyltransferase (253 aa).

Residues Gly111 and 131–136 each bind S-adenosyl-L-methionine; that span reads LGDFVL.

The protein belongs to the RNA methyltransferase TrmD family. Homodimer.

It is found in the cytoplasm. The enzyme catalyses guanosine(37) in tRNA + S-adenosyl-L-methionine = N(1)-methylguanosine(37) in tRNA + S-adenosyl-L-homocysteine + H(+). Its function is as follows. Specifically methylates guanosine-37 in various tRNAs. This is tRNA (guanine-N(1)-)-methyltransferase from Synechococcus sp. (strain JA-3-3Ab) (Cyanobacteria bacterium Yellowstone A-Prime).